A 203-amino-acid polypeptide reads, in one-letter code: Outer-membrane lipoprotein carrier protein (203 aa).

The N-terminal stretch at 1-20 is a signal peptide; sequence MKKWLAISCLIAGMTSTAVY.

The protein belongs to the LolA family. In terms of assembly, monomer.

The protein localises to the periplasm. In terms of biological role, participates in the translocation of lipoproteins from the inner membrane to the outer membrane. Only forms a complex with a lipoprotein if the residue after the N-terminal Cys is not an aspartate (The Asp acts as a targeting signal to indicate that the lipoprotein should stay in the inner membrane). In Pectobacterium carotovorum subsp. carotovorum (strain PC1), this protein is Outer-membrane lipoprotein carrier protein.